The chain runs to 521 residues: Ankyrin repeat domain-containing protein 34B (521 aa).

4 ANK repeats span residues T9–E38, R42–I79, F83–L113, and T117–K146. The segment at Q161–S188 is disordered. Over residues G177–S188 the composition is skewed to polar residues.

It belongs to the ANKRD34 family.

The protein resides in the cytoplasm. The protein localises to the nucleus. This is Ankyrin repeat domain-containing protein 34B (ankrd34b) from Xenopus laevis (African clawed frog).